Consider the following 970-residue polypeptide: Villin-3 (970 aa).

Gelsolin-like repeat units follow at residues 31 to 111, 151 to 219, 273 to 339, 416 to 484, 536 to 576, and 643 to 714; these read AVPV…ERFL, TVHV…EDGK, VLTR…TVIF, KFYS…PAEF, AIQV…QELA, and NFTQ…PQFF. The interval 741-908 is disordered; it reads DGVKPKLDKP…EGQPENEEGL (168 aa). Positions 755-778 are enriched in polar residues; it reads TTSSSHTGRSSVPEKSQRSRSMSF. A compositionally biased stretch (low complexity) spans 833-842; the sequence is AASIAAISAS. Over residues 878 to 893 the composition is skewed to polar residues; the sequence is KDSTPSKDSPTVTPTI. One can recognise an HP domain in the interval 905-970; that stretch reads EEGLPVYPYE…NRLKIALQLF (66 aa).

Belongs to the villin/gelsolin family. In terms of tissue distribution, expressed in roots, young leaves, and inflorescences, mostly in the vasculature of roots, leaves, and filaments of the anthers and in epidermal cells of the elongation zone and root hairs. Also detected in guard cells.

It localises to the cytoplasm. The protein localises to the cytoskeleton. In terms of biological role, ca(2+)-regulated actin-binding protein. Binds actin microfilaments (MFs). Involved in actin filament bundling, severing and capping. Caps the barbed end of actin filaments and is able to sever them in a calcium-dependent manner. MF severing is promoted by VLN1. This Oryza sativa subsp. japonica (Rice) protein is Villin-3.